Reading from the N-terminus, the 277-residue chain is Caspase-3 (277 aa).

Methionine 1 is modified (N-acetylmethionine). 2 consecutive propeptides follow at residues 1-9 (MENNKTSVD) and 10-28 (SKSINNFEVKTIHGSKSVD). Residue lysine 11 is modified to N6-acetyllysine. A Phosphoserine modification is found at serine 26. Catalysis depends on residues histidine 121 and cysteine 163. Cysteine 163 bears the S-nitrosocysteine; in inhibited form mark.

The protein belongs to the peptidase C14A family. As to quaternary structure, heterotetramer that consists of two anti-parallel arranged heterodimers, each one formed by a 17 kDa (p17) and a 12 kDa (p12) subunit. Interacts with BIRC6/bruce. Cleavage by granzyme B, caspase-6, caspase-8 and caspase-10 generates the two active subunits. Additional processing of the propeptides is likely due to the autocatalytic activity of the activated protease. Active heterodimers between the small subunit of caspase-7 protease and the large subunit of caspase-3 also occur and vice versa. In terms of processing, S-nitrosylated on its catalytic site cysteine in unstimulated cell lines and denitrosylated upon activation of the Fas apoptotic pathway, associated with an increase in intracellular caspase activity. Fas therefore activates caspase-3 not only by inducing the cleavage of the caspase zymogen to its active subunits, but also by stimulating the denitrosylation of its active site thiol. Post-translationally, ubiquitinated by BIRC6; this activity is inhibited by DIABLO/SMAC. In terms of tissue distribution, highest expression in spleen, lung, liver, kidney and heart. Lower expression in brain, skeletal muscle and testis.

The protein localises to the cytoplasm. The enzyme catalyses Strict requirement for an Asp residue at positions P1 and P4. It has a preferred cleavage sequence of Asp-Xaa-Xaa-Asp-|- with a hydrophobic amino-acid residue at P2 and a hydrophilic amino-acid residue at P3, although Val or Ala are also accepted at this position.. With respect to regulation, inhibited by BIRC6; following inhibition of BIRC6-caspase binding by DIABLO/SMAC, BIRC6 is subjected to caspase cleavage, leading to an increase in active caspases. Its function is as follows. Thiol protease that acts as a major effector caspase involved in the execution phase of apoptosis. Following cleavage and activation by initiator caspases (CASP8, CASP9 and/or CASP10), mediates execution of apoptosis by catalyzing cleavage of many proteins. At the onset of apoptosis, it proteolytically cleaves poly(ADP-ribose) polymerase PARP1 at a '216-Asp-|-Gly-217' bond. Cleaves and activates sterol regulatory element binding proteins (SREBPs) between the basic helix-loop-helix leucine zipper domain and the membrane attachment domain. Cleaves and activates caspase-6, -7 and -9 (CASP6, CASP7 and CASP9, respectively). Cleaves and inactivates interleukin-18 (IL18). Triggers cell adhesion in sympathetic neurons through RET cleavage. Cleaves IL-1 beta between an Asp and an Ala, releasing the mature cytokine which is involved in a variety of inflammatory processes. Cleaves and inhibits serine/threonine-protein kinase AKT1 in response to oxidative stress. Acts as an inhibitor of type I interferon production during virus-induced apoptosis by mediating cleavage of antiviral proteins CGAS, IRF3 and MAVS, thereby preventing cytokine overproduction. Also involved in pyroptosis by mediating cleavage and activation of gasdermin-E (GSDME). Cleaves XRCC4 and phospholipid scramblase proteins XKR4, XKR8 and XKR9, leading to promote phosphatidylserine exposure on apoptotic cell surface. Cleaves BIRC6 following inhibition of BIRC6-caspase binding by DIABLO/SMAC. This is Caspase-3 (Casp3) from Mus musculus (Mouse).